We begin with the raw amino-acid sequence, 379 residues long: GTP cyclohydrolase 1 type 2 homolog (379 aa).

A divalent metal cation contacts are provided by His-64, His-65, Asp-103, His-333, and Glu-337.

It belongs to the GTP cyclohydrolase I type 2/NIF3 family. In terms of assembly, homohexamer.

This Mycobacterium bovis (strain ATCC BAA-935 / AF2122/97) protein is GTP cyclohydrolase 1 type 2 homolog.